The sequence spans 609 residues: Granule-bound starch synthase 1, chloroplastic/amyloplastic (609 aa).

Residues 1–77 constitute a chloroplast transit peptide; that stretch reads MSALTTSQLA…SRRFPSVVVY (77 aa). The interval 29–67 is disordered; sequence RHGFQGLKPRSPAGGDATSLSVTTSARATPKQQRSVQRG. Polar residues predominate over residues 46–66; the sequence is TSLSVTTSARATPKQQRSVQR. Lysine 97 is an ADP-alpha-D-glucose binding site. Residues glycine 100, arginine 408, lysine 413, lysine 462, and glutamine 493 each contribute to the ADP site. A disulfide bridge links cysteine 337 with cysteine 529.

It belongs to the glycosyltransferase 1 family. Bacterial/plant glycogen synthase subfamily.

Its subcellular location is the plastid. It is found in the chloroplast. The protein resides in the amyloplast. It carries out the reaction an NDP-alpha-D-glucose + [(1-&gt;4)-alpha-D-glucosyl](n) = [(1-&gt;4)-alpha-D-glucosyl](n+1) + a ribonucleoside 5'-diphosphate + H(+). Its pathway is glycan biosynthesis; starch biosynthesis. In terms of biological role, required for the synthesis of amylose in endosperm. In Oryza sativa subsp. indica (Rice), this protein is Granule-bound starch synthase 1, chloroplastic/amyloplastic (WAXY).